The primary structure comprises 440 residues: Serine hydroxymethyltransferase (440 aa).

(6S)-5,6,7,8-tetrahydrofolate contacts are provided by residues Leu119 and 123 to 125; that span reads GHL. Position 228 is an N6-(pyridoxal phosphate)lysine (Lys228). 370 to 372 lines the (6S)-5,6,7,8-tetrahydrofolate pocket; the sequence is SPF.

Belongs to the SHMT family. In terms of assembly, homodimer. The cofactor is pyridoxal 5'-phosphate.

Its subcellular location is the cytoplasm. The catalysed reaction is (6R)-5,10-methylene-5,6,7,8-tetrahydrofolate + glycine + H2O = (6S)-5,6,7,8-tetrahydrofolate + L-serine. It participates in one-carbon metabolism; tetrahydrofolate interconversion. Its pathway is amino-acid biosynthesis; glycine biosynthesis; glycine from L-serine: step 1/1. Functionally, catalyzes the reversible interconversion of serine and glycine with tetrahydrofolate (THF) serving as the one-carbon carrier. This reaction serves as the major source of one-carbon groups required for the biosynthesis of purines, thymidylate, methionine, and other important biomolecules. Also exhibits THF-independent aldolase activity toward beta-hydroxyamino acids, producing glycine and aldehydes, via a retro-aldol mechanism. This is Serine hydroxymethyltransferase from Chlorobaculum parvum (strain DSM 263 / NCIMB 8327) (Chlorobium vibrioforme subsp. thiosulfatophilum).